We begin with the raw amino-acid sequence, 91 residues long: DNA-directed RNA polymerase subunit Rpo11 (91 aa).

The protein belongs to the archaeal Rpo11/eukaryotic RPB11/RPC19 RNA polymerase subunit family. As to quaternary structure, part of the RNA polymerase complex.

The protein localises to the cytoplasm. It carries out the reaction RNA(n) + a ribonucleoside 5'-triphosphate = RNA(n+1) + diphosphate. Its function is as follows. DNA-dependent RNA polymerase (RNAP) catalyzes the transcription of DNA into RNA using the four ribonucleoside triphosphates as substrates. This chain is DNA-directed RNA polymerase subunit Rpo11, found in Methanothrix thermoacetophila (strain DSM 6194 / JCM 14653 / NBRC 101360 / PT) (Methanosaeta thermophila).